The following is a 139-amino-acid chain: D-ribose pyranase (139 aa).

The active-site Proton donor is the His-20. Substrate contacts are provided by residues Asp-28, His-106, and 128 to 130 (YAN).

Belongs to the RbsD / FucU family. RbsD subfamily. In terms of assembly, homodecamer.

Its subcellular location is the cytoplasm. It catalyses the reaction beta-D-ribopyranose = beta-D-ribofuranose. The protein operates within carbohydrate metabolism; D-ribose degradation; D-ribose 5-phosphate from beta-D-ribopyranose: step 1/2. Catalyzes the interconversion of beta-pyran and beta-furan forms of D-ribose. In Salmonella paratyphi B (strain ATCC BAA-1250 / SPB7), this protein is D-ribose pyranase.